The following is an 801-amino-acid chain: Probable methionine--tRNA ligase (801 aa).

Residues 25 to 35 (PYVNNVPHLGN) carry the 'HIGH' region motif. Positions 347–351 (KFSKS) match the 'KMSKS' region motif. Lys-350 contributes to the ATP binding site. The interval 606–633 (DKLKGTKLSDGGQKKEQKKQSGGSKSKN) is disordered. The region spanning 639-742 (TVAKLDIRVG…ESAAVGERVT (104 aa)) is the tRNA-binding domain.

Belongs to the class-I aminoacyl-tRNA synthetase family.

It is found in the cytoplasm. It carries out the reaction tRNA(Met) + L-methionine + ATP = L-methionyl-tRNA(Met) + AMP + diphosphate. This chain is Probable methionine--tRNA ligase, found in Oryza sativa subsp. japonica (Rice).